A 361-amino-acid polypeptide reads, in one-letter code: Divinyl chlorophyll a/b light-harvesting protein PcbE (361 aa).

A run of 6 helical transmembrane segments spans residues 27–47 (FIGS…ANTL), 88–108 (VAFV…AGLL), 149–169 (FILG…VEWA), 210–230 (VMGG…FHIA), 250–270 (AVLS…AFWC), and 315–335 (LSNV…WHAI).

It belongs to the PsbB/PsbC family. IsiA/Pcb subfamily. As to quaternary structure, the antenna complex consists of divinyl chlorophylls (a and b) and divinyl chlorophyll a/b binding proteins and binds more divinyl chlorophyll b than does the antenna complex from high-light-adapted Prochlorococcus. It depends on divinyl chlorophyll a as a cofactor. Requires divinyl chlorophyll b as cofactor.

The protein resides in the cellular thylakoid membrane. In terms of biological role, the antenna complex functions as a light receptor, it captures and delivers excitation energy to photosystems II and I. The Prochlorales pcb genes are not related to higher plant LHCs. The polypeptide is Divinyl chlorophyll a/b light-harvesting protein PcbE (pcbE) (Prochlorococcus marinus (strain SARG / CCMP1375 / SS120)).